Consider the following 332-residue polypeptide: Protein EXORDIUM-like 6 (332 aa).

The first 27 residues, Met-1–Ser-27, serve as a signal peptide directing secretion. N-linked (GlcNAc...) asparagine glycans are attached at residues Asn-36, Asn-102, and Asn-143.

Belongs to the EXORDIUM family.

Its subcellular location is the secreted. It localises to the extracellular space. The protein localises to the apoplast. Its function is as follows. May play a role in a brassinosteroid-dependent regulation of growth and development. The chain is Protein EXORDIUM-like 6 (EXL6) from Arabidopsis thaliana (Mouse-ear cress).